The following is a 1012-amino-acid chain: Putative cellulose synthase-like protein D5 (1012 aa).

Residues 1 to 85 (MSGDYANYTV…APSSNKSLLV (85 aa)) are disordered. Low complexity predominate over residues 20 to 37 (PSGGAPPAAPSAGGARPG). Residues 57 to 69 (GGGDDGAKMDRRL) show a composition bias toward basic and acidic residues. 2 helical membrane passes run 150-170 (ILSPYRLLVLVRFVALFLFLV) and 180-200 (ALWLWGISIVCEFWFAFSWLL). Aspartate 280 is a catalytic residue. Residues 597–620 (PRQGSEAMPGAGGGRSGGGSVGGD) form a disordered region. Positions 606–618 (GAGGGRSGGGSVG) are enriched in gly residues. The active site involves aspartate 717. 6 consecutive transmembrane segments (helical) span residues 799–819 (LFLIMYCLLPALSLFSGQFIV), 825–845 (TFLSYLLLITITLMLLCLLEV), 871–891 (LAAVLQGLLKVVAGIEISFTL), 914–934 (SLFIPPLAVIGINIIALVVGV), 948–968 (LLGGGFFSFWVLAHYYPFAKG), and 978–998 (TIVYVWAGLISITVSLLWITI).

Belongs to the glycosyltransferase 2 family. Plant cellulose synthase-like D subfamily.

It is found in the golgi apparatus membrane. Functionally, thought to be a Golgi-localized beta-glycan synthase that polymerize the backbones of noncellulosic polysaccharides (hemicelluloses) of plant cell wall. In Oryza sativa subsp. indica (Rice), this protein is Putative cellulose synthase-like protein D5 (CSLD5).